Reading from the N-terminus, the 514-residue chain is Lysine--tRNA ligase (514 aa).

Residues Met-1–Gln-13 are compositionally biased toward low complexity. A disordered region spans residues Met-1 to Asn-21. The Mg(2+) site is built by Glu-422 and Glu-429.

The protein belongs to the class-II aminoacyl-tRNA synthetase family. In terms of assembly, homodimer. Mg(2+) is required as a cofactor.

The protein localises to the cytoplasm. It catalyses the reaction tRNA(Lys) + L-lysine + ATP = L-lysyl-tRNA(Lys) + AMP + diphosphate. This Psychrobacter cryohalolentis (strain ATCC BAA-1226 / DSM 17306 / VKM B-2378 / K5) protein is Lysine--tRNA ligase.